Consider the following 423-residue polypeptide: Glucose-1-phosphate adenylyltransferase (423 aa).

Alpha-D-glucose 1-phosphate is bound by residues tyrosine 110, glycine 175, 190–191 (EK), and serine 208.

This sequence belongs to the bacterial/plant glucose-1-phosphate adenylyltransferase family. In terms of assembly, homotetramer.

The enzyme catalyses alpha-D-glucose 1-phosphate + ATP + H(+) = ADP-alpha-D-glucose + diphosphate. It participates in glycan biosynthesis; glycogen biosynthesis. Its function is as follows. Involved in the biosynthesis of ADP-glucose, a building block required for the elongation reactions to produce glycogen. Catalyzes the reaction between ATP and alpha-D-glucose 1-phosphate (G1P) to produce pyrophosphate and ADP-Glc. The chain is Glucose-1-phosphate adenylyltransferase from Nitrosococcus oceani (strain ATCC 19707 / BCRC 17464 / JCM 30415 / NCIMB 11848 / C-107).